The sequence spans 370 residues: Cytochrome b (370 aa).

The next 4 helical transmembrane spans lie at 25–45 (FGSM…FLAV), 69–90 (WMMQ…YIHI), 105–125 (WLSG…GYVL), and 170–190 (FFAL…LHIL). Residues His75 and His89 each contribute to the heme b site. Residues His174 and His188 each coordinate heme b. His193 lines the a ubiquinone pocket. 4 consecutive transmembrane segments (helical) span residues 218 to 238 (YKDM…VSFF), 280 to 300 (LGGA…PFTH), 312 to 332 (FMQL…WTAT), and 339 to 358 (FTTI…ISNP).

The protein belongs to the cytochrome b family. As to quaternary structure, the cytochrome bc1 complex contains 3 respiratory subunits (MT-CYB, CYC1 and UQCRFS1), 2 core proteins (UQCRC1 and UQCRC2) and probably 6 low-molecular weight proteins. Heme b serves as cofactor.

The protein localises to the mitochondrion inner membrane. Functionally, component of the ubiquinol-cytochrome c reductase complex (complex III or cytochrome b-c1 complex) that is part of the mitochondrial respiratory chain. The b-c1 complex mediates electron transfer from ubiquinol to cytochrome c. Contributes to the generation of a proton gradient across the mitochondrial membrane that is then used for ATP synthesis. This Chilabothrus strigilatus fosteri (Bimini Island boa constrictor) protein is Cytochrome b (MT-CYB).